Here is a 768-residue protein sequence, read N- to C-terminus: Phosphoribosylformylglycinamidine synthase subunit PurL (768 aa).

His46 is an active-site residue. ATP-binding residues include Tyr49 and Lys88. A Mg(2+)-binding site is contributed by Glu90. Residues 91–94 (SHNH) and Arg113 contribute to the substrate site. Catalysis depends on His92, which acts as the Proton acceptor. Asp114 provides a ligand contact to Mg(2+). A substrate-binding site is contributed by Gln237. Asp265 lines the Mg(2+) pocket. Substrate is bound at residue 309 to 311 (ESQ). 2 residues coordinate ATP: Asp514 and Gly551. Asn552 serves as a coordination point for Mg(2+). Substrate is bound at residue Ser554.

This sequence belongs to the FGAMS family. Monomer. Part of the FGAM synthase complex composed of 1 PurL, 1 PurQ and 2 PurS subunits.

The protein resides in the cytoplasm. It catalyses the reaction N(2)-formyl-N(1)-(5-phospho-beta-D-ribosyl)glycinamide + L-glutamine + ATP + H2O = 2-formamido-N(1)-(5-O-phospho-beta-D-ribosyl)acetamidine + L-glutamate + ADP + phosphate + H(+). The protein operates within purine metabolism; IMP biosynthesis via de novo pathway; 5-amino-1-(5-phospho-D-ribosyl)imidazole from N(2)-formyl-N(1)-(5-phospho-D-ribosyl)glycinamide: step 1/2. Its function is as follows. Part of the phosphoribosylformylglycinamidine synthase complex involved in the purines biosynthetic pathway. Catalyzes the ATP-dependent conversion of formylglycinamide ribonucleotide (FGAR) and glutamine to yield formylglycinamidine ribonucleotide (FGAM) and glutamate. The FGAM synthase complex is composed of three subunits. PurQ produces an ammonia molecule by converting glutamine to glutamate. PurL transfers the ammonia molecule to FGAR to form FGAM in an ATP-dependent manner. PurS interacts with PurQ and PurL and is thought to assist in the transfer of the ammonia molecule from PurQ to PurL. The sequence is that of Phosphoribosylformylglycinamidine synthase subunit PurL from Synechocystis sp. (strain ATCC 27184 / PCC 6803 / Kazusa).